Here is a 54-residue protein sequence, read N- to C-terminus: Ovomucoid (54 aa).

Positions 4 to 54 (VDCSEYPKPACTLEYRPLCGSDSKTYGNKCNFCNAVVESNGTLTLSHFGKC) constitute a Kazal-like domain. 3 cysteine pairs are disulfide-bonded: Cys6/Cys36, Cys14/Cys33, and Cys22/Cys54. A glycan (N-linked (GlcNAc...) asparagine) is linked at Asn43.

It is found in the secreted. The polypeptide is Ovomucoid (Alectoris chukar (Chukar partridge)).